The following is a 181-amino-acid chain: RNA-binding protein (181 aa).

The segment at 106 to 181 (FLTSVNPGES…DANTRKSKRK (76 aa)) is disordered. Residues 141–157 (RNSKKGAKKSSSARKKK) show a composition bias toward basic residues. Over residues 160–172 (SSNSETDLSSDSD) the composition is skewed to low complexity.

It belongs to the phytoreovirus RNA-binding protein family.

It localises to the host cytoplasm. Functionally, constituent of viral factories. Binds to ssRNA and dsRNA. This is RNA-binding protein from Rice dwarf virus (isolate Akita) (RDV).